A 245-amino-acid polypeptide reads, in one-letter code: Small ribosomal subunit protein uS2 (245 aa).

Belongs to the universal ribosomal protein uS2 family.

The protein is Small ribosomal subunit protein uS2 of Dehalococcoides mccartyi (strain CBDB1).